The chain runs to 469 residues: 3-isopropylmalate dehydratase large subunit (469 aa).

Residues C350, C410, and C413 each contribute to the [4Fe-4S] cluster site.

Belongs to the aconitase/IPM isomerase family. LeuC type 1 subfamily. Heterodimer of LeuC and LeuD. Requires [4Fe-4S] cluster as cofactor.

It catalyses the reaction (2R,3S)-3-isopropylmalate = (2S)-2-isopropylmalate. Its pathway is amino-acid biosynthesis; L-leucine biosynthesis; L-leucine from 3-methyl-2-oxobutanoate: step 2/4. Catalyzes the isomerization between 2-isopropylmalate and 3-isopropylmalate, via the formation of 2-isopropylmaleate. In Brucella melitensis biotype 2 (strain ATCC 23457), this protein is 3-isopropylmalate dehydratase large subunit.